The sequence spans 128 residues: S-adenosylmethionine decarboxylase proenzyme (128 aa).

Residue S61 is the Schiff-base intermediate with substrate; via pyruvic acid of the active site. S61 carries the post-translational modification Pyruvic acid (Ser); by autocatalysis. H66 functions as the Proton acceptor; for processing activity in the catalytic mechanism. The active-site Proton donor; for catalytic activity is the C81.

The protein belongs to the prokaryotic AdoMetDC family. Type 1 subfamily. As to quaternary structure, heterotetramer of two alpha and two beta chains arranged as a dimer of alpha/beta heterodimers. Requires pyruvate as cofactor. Post-translationally, is synthesized initially as an inactive proenzyme. Formation of the active enzyme involves a self-maturation process in which the active site pyruvoyl group is generated from an internal serine residue via an autocatalytic post-translational modification. Two non-identical subunits are generated from the proenzyme in this reaction, and the pyruvate is formed at the N-terminus of the alpha chain, which is derived from the carboxyl end of the proenzyme. The post-translation cleavage follows an unusual pathway, termed non-hydrolytic serinolysis, in which the side chain hydroxyl group of the serine supplies its oxygen atom to form the C-terminus of the beta chain, while the remainder of the serine residue undergoes an oxidative deamination to produce ammonia and the pyruvoyl group blocking the N-terminus of the alpha chain.

It carries out the reaction S-adenosyl-L-methionine + H(+) = S-adenosyl 3-(methylsulfanyl)propylamine + CO2. It participates in amine and polyamine biosynthesis; S-adenosylmethioninamine biosynthesis; S-adenosylmethioninamine from S-adenosyl-L-methionine: step 1/1. In terms of biological role, catalyzes the decarboxylation of S-adenosylmethionine to S-adenosylmethioninamine (dcAdoMet), the propylamine donor required for the synthesis of the polyamines spermine and spermidine from the diamine putrescine. This Synechococcus sp. (strain WH7803) protein is S-adenosylmethionine decarboxylase proenzyme.